A 237-amino-acid chain; its full sequence is Sensory rhodopsin-2 (237 aa).

At 1–2 the chain is on the extracellular side; that stretch reads MA. Residues 3–23 form a helical membrane-spanning segment; sequence LTTWFWVGAVGMLAGTVLPIR. At 24-31 the chain is on the cytoplasmic side; the sequence is DCIRHPSH. The helical transmembrane segment at 32-53 threads the bilayer; it reads RRYDLVLAGITGLAAIAYTTMG. At 54 to 67 the chain is on the extracellular side; it reads LGITATTVGDRTVY. The helical transmembrane segment at 68-89 threads the bilayer; the sequence is LARYIDWLVTTPLIVLYLAMLA. Topologically, residues 90-92 are cytoplasmic; that stretch reads RPG. A helical transmembrane segment spans residues 93–115; that stretch reads HRTSAWLLAADVFVIAAGIAAAL. Over 116–119 the chain is Extracellular; it reads TTGV. A helical transmembrane segment spans residues 120–147; sequence QRWLFFAVGAAGYAALLYGLLGTLPRAL. Topologically, residues 148–150 are cytoplasmic; the sequence is GDD. A helical membrane pass occupies residues 151–178; it reads PRVRSLFVTLRNITVVLWTLYPVVWLLS. The Extracellular portion of the chain corresponds to 179-186; that stretch reads PAGIGILQ. Residues 187–214 form a helical membrane-spanning segment; it reads TEMYTIVVVYLDFISKVAFVAFAVLGAD. The residue at position 202 (Lys-202) is an N6-(retinylidene)lysine. At 215–237 the chain is on the cytoplasmic side; sequence AVSRLVAADAAAPATAEPTPDGD.

The protein belongs to the archaeal/bacterial/fungal opsin family. In terms of assembly, interacts with HTR-II.

It localises to the cell membrane. Photophobic photoreceptor responsible for the negative phototaxis. Activates the sensory rhodopsin II transducer (HTR-II) in response to blue light. The chain is Sensory rhodopsin-2 (sop2) from Halobacterium salinarum (strain ATCC 700922 / JCM 11081 / NRC-1) (Halobacterium halobium).